The sequence spans 425 residues: Glutamyl-tRNA reductase (425 aa).

Substrate-binding positions include 47 to 50 (TCNR), Ser-107, 112 to 114 (EDQ), and Gln-118. The active-site Nucleophile is the Cys-48. An NADP(+)-binding site is contributed by 187-192 (GAGHMA).

This sequence belongs to the glutamyl-tRNA reductase family. Homodimer.

The catalysed reaction is (S)-4-amino-5-oxopentanoate + tRNA(Glu) + NADP(+) = L-glutamyl-tRNA(Glu) + NADPH + H(+). Its pathway is porphyrin-containing compound metabolism; protoporphyrin-IX biosynthesis; 5-aminolevulinate from L-glutamyl-tRNA(Glu): step 1/2. It functions in the pathway porphyrin-containing compound metabolism; chlorophyll biosynthesis. Functionally, catalyzes the NADPH-dependent reduction of glutamyl-tRNA(Glu) to glutamate 1-semialdehyde (GSA). The polypeptide is Glutamyl-tRNA reductase (Roseiflexus castenholzii (strain DSM 13941 / HLO8)).